Here is a 487-residue protein sequence, read N- to C-terminus: L-tartrate/succinate antiporter (487 aa).

14 helical membrane-spanning segments follow: residues 10–30 (YLAP…AGLE), 33–53 (TWLY…EPVP), 54–74 (GAVV…WLLF), 93–113 (WAVS…FMFG), 137–157 (TLFL…VTPS), 189–209 (IGSY…AIFL), 236–256 (FLGM…LAYV), 292–312 (LMVG…AAMV), 313–333 (GYSV…DIVS), 340–360 (VFFW…TGFI), 370–390 (SLSG…FYLL), 393–413 (FFAS…AAAL), 418–438 (IPLP…SILT), and 462–482 (LGAI…LLWM).

Belongs to the SLC13A/DASS transporter (TC 2.A.47) family. DIT1 subfamily.

It is found in the cell inner membrane. The enzyme catalyses (2R,3R)-tartrate(out) + succinate(in) = (2R,3R)-tartrate(in) + succinate(out). Its function is as follows. Catalyzes the uptake of tartrate in exchange for intracellular succinate. Essential for anaerobic L-tartrate fermentation. This chain is L-tartrate/succinate antiporter (ttdT), found in Escherichia coli O6:H1 (strain CFT073 / ATCC 700928 / UPEC).